Reading from the N-terminus, the 157-residue chain is Putative pre-16S rRNA nuclease (157 aa).

It belongs to the YqgF nuclease family.

It is found in the cytoplasm. Could be a nuclease involved in processing of the 5'-end of pre-16S rRNA. This chain is Putative pre-16S rRNA nuclease, found in Anaplasma marginale (strain St. Maries).